A 497-amino-acid chain; its full sequence is 4,4'-diaponeurosporene oxygenase (497 aa).

7–19 (VIGGGLGGISAAI) lines the FAD pocket.

This sequence belongs to the carotenoid/retinoid oxidoreductase family. CrtP subfamily. FAD is required as a cofactor.

The catalysed reaction is all-trans-4,4'-diaponeurosporene + 2 AH2 + 2 O2 = 4,4'-diaponeurosporenal + 2 A + 3 H2O. It participates in carotenoid biosynthesis; staphyloxanthin biosynthesis; staphyloxanthin from farnesyl diphosphate: step 3/5. Its function is as follows. Involved in the biosynthesis of the yellow-orange carotenoid staphyloxanthin, which plays a role in the virulence via its protective function against oxidative stress. Catalyzes the oxidation of the terminal methyl side group of 4,4'-diaponeurosporene to form 4,4'-diaponeurosporen-4-al. The C40 carotenoid lycopene is a poor substrate. This is 4,4'-diaponeurosporene oxygenase from Staphylococcus aureus (strain Mu50 / ATCC 700699).